The sequence spans 215 residues: uncharacterized protein (215 aa).

The protein to T.pallidum TP_0127, TP_0618 and TP_0619.

This is an uncharacterized protein from Treponema pallidum (strain Nichols).